A 210-amino-acid polypeptide reads, in one-letter code: Large ribosomal subunit protein uL4 (210 aa).

Over residues Lys44–Arg54 the composition is skewed to polar residues. The tract at residues Lys44–Gly85 is disordered. Basic residues predominate over residues Gly60 to Gly71.

This sequence belongs to the universal ribosomal protein uL4 family. In terms of assembly, part of the 50S ribosomal subunit.

Functionally, one of the primary rRNA binding proteins, this protein initially binds near the 5'-end of the 23S rRNA. It is important during the early stages of 50S assembly. It makes multiple contacts with different domains of the 23S rRNA in the assembled 50S subunit and ribosome. In terms of biological role, forms part of the polypeptide exit tunnel. The polypeptide is Large ribosomal subunit protein uL4 (Prochlorococcus marinus (strain MIT 9301)).